Reading from the N-terminus, the 239-residue chain is Protein GrpE (239 aa).

Disordered stretches follow at residues 1–54 (MIEN…ELKN) and 208–239 (SMGP…SEDV). Residues 19 to 42 (QDNALENVSSAQELTTENNELSSQ) are compositionally biased toward polar residues. Residues 43-53 (KTEEINTEELK) show a composition bias toward basic and acidic residues. Residues 228 to 239 (DIDSEENTSEDV) show a composition bias toward acidic residues.

The protein belongs to the GrpE family. In terms of assembly, homodimer.

The protein localises to the cytoplasm. Functionally, participates actively in the response to hyperosmotic and heat shock by preventing the aggregation of stress-denatured proteins, in association with DnaK and GrpE. It is the nucleotide exchange factor for DnaK and may function as a thermosensor. Unfolded proteins bind initially to DnaJ; upon interaction with the DnaJ-bound protein, DnaK hydrolyzes its bound ATP, resulting in the formation of a stable complex. GrpE releases ADP from DnaK; ATP binding to DnaK triggers the release of the substrate protein, thus completing the reaction cycle. Several rounds of ATP-dependent interactions between DnaJ, DnaK and GrpE are required for fully efficient folding. The chain is Protein GrpE from Prochlorococcus marinus (strain AS9601).